A 179-amino-acid chain; its full sequence is uncharacterized protein (179 aa).

The N-terminal stretch at 1-27 (MNKSMIQSGGYVLLAGLILAMSSTLFA) is a signal peptide. A disulfide bridge connects residues Cys43 and Cys83.

Belongs to the fimbrial protein family.

The protein localises to the fimbrium. Its function is as follows. Part of the yfcOPQRSUV fimbrial operon. Could contribute to adhesion to various surfaces in specific environmental niches. Increases adhesion to eukaryotic T24 bladder epithelial cells in the absence of fim genes. This is an uncharacterized protein from Escherichia coli (strain K12).